The sequence spans 576 residues: Carboxypeptidase S (576 aa).

Residues 1–19 lie on the Cytoplasmic side of the membrane; it reads MIALPVEKAPRKSLWQRHR. A Glycyl lysine isopeptide (Lys-Gly) (interchain with G-Cter in ubiquitin) cross-link involves residue K8. The chain crosses the membrane as a helical span at residues 20-40; that stretch reads AFISGIVALIIIGTFFLTSGL. The Lumenal portion of the chain corresponds to 41 to 576; it reads HPAPPHEAKR…EYIVNVNEYA (536 aa). The segment at 44 to 65 is disordered; that stretch reads PPHEAKRPHHGKGPMHSPKCEK. N88 carries N-linked (GlcNAc...) asparagine glycosylation. H168 is a Zn(2+) binding site. The active site involves D170. N176 is a glycosylation site (N-linked (GlcNAc...) asparagine). Residue D205 coordinates Zn(2+). Residue N228 is glycosylated (N-linked (GlcNAc...) asparagine). E239 functions as the Proton acceptor in the catalytic mechanism. E240 and D268 together coordinate Zn(2+). Residues N381 and N525 are each glycosylated (N-linked (GlcNAc...) asparagine). H547 serves as a coordination point for Zn(2+).

The protein belongs to the peptidase M20A family. As to quaternary structure, yscS is synthesized as one polypeptide chain precursor which after carbohydrate modification in the secretory pathway yields two active precursor molecules. The proteolytically unprocessed forms are associated with the membrane, whereas the mature forms of the enzyme are soluble. Requires Zn(2+) as cofactor. Post-translationally, glycosylated. Ubiquitinated. Ubiquitination mediates sorting into internal vesicles in late endosomes. TUL1 is required for ubiquitination.

It is found in the vacuole membrane. It catalyses the reaction Release of a C-terminal amino acid from a peptide in which glycine is the penultimate amino acid, e.g. Z-Gly-|-Leu.. Necessary for use of certain peptides as sole nitrogen source. May also cleave intracellularly generated peptides to recycle amino acids for protein synthesis. The protein is Carboxypeptidase S (CPS1) of Saccharomyces cerevisiae (strain ATCC 204508 / S288c) (Baker's yeast).